Reading from the N-terminus, the 77-residue chain is Conotoxin Vc1 (77 aa).

An N-terminal signal peptide occupies residues 1–22; that stretch reads MRTSGRLLLLCLAVGLLLESQA. 2 propeptides span residues 23-58 and 73-77; these read HPNADAGDATRDVGSDRTSVELSKMLKGWQAEKGQR and RRSFY.

This sequence belongs to the conotoxin H superfamily. In terms of tissue distribution, expressed by the venom duct.

The protein resides in the secreted. Functionally, probable toxin. This Conus victoriae (Queen Victoria cone) protein is Conotoxin Vc1.